Reading from the N-terminus, the 282-residue chain is TPR repeat protein oca3 (282 aa).

TPR repeat units lie at residues 16–50 (IVAL…ALTT), 71–104 (PRVE…DPTH), 139–172 (LEAW…QPFE), and 174–211 (RLFA…CEEY).

Its subcellular location is the cytoplasm. It localises to the nucleus. Functionally, may be involved in cell cycle regulation. The protein is TPR repeat protein oca3 (oca3) of Schizosaccharomyces pombe (strain 972 / ATCC 24843) (Fission yeast).